Here is a 454-residue protein sequence, read N- to C-terminus: Aquaglyceroporin-9 (454 aa).

Residues Met-1–Glu-186 lie on the Cytoplasmic side of the membrane. A helical transmembrane segment spans residues Phe-187–Ser-207. The Extracellular portion of the chain corresponds to Ser-208–Ser-216. The chain crosses the membrane as a helical span at residues Ile-217–Ala-237. The Cytoplasmic segment spans residues His-238 to Lys-257. The NPA 1 motif lies at Asn-240–Ala-242. A helical transmembrane segment spans residues Phe-258–Ala-278. Topologically, residues Asn-279–Lys-316 are extracellular. N-linked (GlcNAc...) asparagine glycosylation is present at Asn-299. Residues Thr-317 to Leu-337 form a helical membrane-spanning segment. Topologically, residues Gln-338–Leu-351 are cytoplasmic. A helical transmembrane segment spans residues Gly-352–Ile-372. The NPA 2 signature appears at Asn-373–Ala-375. Residues Asn-373–Val-403 are Extracellular-facing. A helical membrane pass occupies residues Pro-404–Phe-424. Residues Thr-425–Val-454 lie on the Cytoplasmic side of the membrane.

Belongs to the MIP/aquaporin (TC 1.A.8) family.

The protein localises to the membrane. It carries out the reaction H2O(in) = H2O(out). The enzyme catalyses glycerol(in) = glycerol(out). In terms of biological role, water channel required to facilitate the transport of water across membranes. May play a role in the vegetative growth and pathogenicity. This is Aquaglyceroporin-9 from Botryotinia fuckeliana (strain B05.10) (Noble rot fungus).